Consider the following 287-residue polypeptide: Orotidine 5'-phosphate decarboxylase (287 aa).

K97 (proton donor) is an active-site residue.

Belongs to the OMP decarboxylase family. Type 2 subfamily.

The enzyme catalyses orotidine 5'-phosphate + H(+) = UMP + CO2. It participates in pyrimidine metabolism; UMP biosynthesis via de novo pathway; UMP from orotate: step 2/2. The protein is Orotidine 5'-phosphate decarboxylase (pyrF) of Clostridium perfringens (strain 13 / Type A).